We begin with the raw amino-acid sequence, 407 residues long: B3 domain-containing protein Os07g0183200 (407 aa).

Positions 124–227 (FVKTLMISDF…ELYVGVRRQR (104 aa)) form a DNA-binding region, TF-B3.

It is found in the nucleus. This Oryza sativa subsp. japonica (Rice) protein is B3 domain-containing protein Os07g0183200.